Reading from the N-terminus, the 505-residue chain is Holliday junction branch migration ATPase PINA (505 aa).

Residues 2 to 106 enclose the PINc domain; the sequence is NDLMLDKSAL…IVTADETQKK (105 aa). The tract at residues 434–505 is KH domain; the sequence is PVNRGITMSN…NIKIKIKLSD (72 aa). Positions 493–505 are required for maximum interaction with Hjc and Hjm; the sequence is KKNNIKIKIKLSD.

In terms of assembly, homohexamer; the central pore (25-31 Angstroms) is large enough to hold dsDNA. In PDB:5F4H two of the 6 subunits are in an ATP-binding competent conformation. Interacts with Holliday junction resolvase Hjc; in the presence of HJ DNA this interaction decreases branch migration but not Y-DNA unwinding. Interacts with helicase Hjm (hel308) which decreases the DNA helicase activity of Hjm. Requires Ca(2+) as cofactor.

The catalysed reaction is ATP + H2O = ADP + phosphate + H(+). Promotes Holliday junction (HJ) branch migration and unwinds Y-shaped DNA (but not replication forks or dsDNA) in an ATP hydrolysis-dependent manner. Stimulates cleavage by HJ resolvase Hjc. Unwinds Y-shaped and 3'-flap DNA substrates. In the absence of other proteins stabilizes replication forks (prevents spontaneous unwinding); Hjc, Hjm (Hel308) and PINA coordinate HJ migration and cleavage of replication forks in a coordinated way. Inhibits the 5'-3' (but not 3'-5') helicase activity of helicase Hjm (Hel308) on overhang DNA. Probably acts as an ATP-dependent pump that pulls DNA through the hexamer. This is Holliday junction branch migration ATPase PINA from Saccharolobus islandicus (strain REY15A) (Sulfolobus islandicus).